A 78-amino-acid chain; its full sequence is Large ribosomal subunit protein eL38 (78 aa).

This sequence belongs to the eukaryotic ribosomal protein eL38 family. As to quaternary structure, component of the large ribosomal subunit. Mature ribosomes consist of a small (40S) and a large (60S) subunit. The 40S subunit contains about 32 different proteins and 1 molecule of RNA (18S). The 60S subunit contains 45 different proteins and 3 molecules of RNA (25S, 5.8S and 5S).

It is found in the cytoplasm. Functionally, component of the ribosome, a large ribonucleoprotein complex responsible for the synthesis of proteins in the cell. The small ribosomal subunit (SSU) binds messenger RNAs (mRNAs) and translates the encoded message by selecting cognate aminoacyl-transfer RNA (tRNA) molecules. The large subunit (LSU) contains the ribosomal catalytic site termed the peptidyl transferase center (PTC), which catalyzes the formation of peptide bonds, thereby polymerizing the amino acids delivered by tRNAs into a polypeptide chain. The nascent polypeptides leave the ribosome through a tunnel in the LSU and interact with protein factors that function in enzymatic processing, targeting, and the membrane insertion of nascent chains at the exit of the ribosomal tunnel. This chain is Large ribosomal subunit protein eL38, found in Candida albicans (strain SC5314 / ATCC MYA-2876) (Yeast).